Consider the following 317-residue polypeptide: Epidermal growth factor-like protein (317 aa).

The first 23 residues, Met-1–Ala-23, serve as a signal peptide directing secretion. A may be required for E.coli agglutination activity region spans residues Thr-24–Tyr-33. EGF-like domains are found at residues His-93–Ile-128, Val-130–Thr-161, Gly-163–Gln-195, Ala-208–Ala-243, Lys-245–Ile-280, and Tyr-282–Val-315. 18 disulfide bridges follow: Cys-98-Cys-107, Cys-102-Cys-113, Cys-115-Cys-127, Cys-131-Cys-140, Cys-135-Cys-145, Cys-147-Cys-160, Cys-164-Cys-174, Cys-168-Cys-180, Cys-182-Cys-194, Cys-213-Cys-222, Cys-217-Cys-228, Cys-230-Cys-242, Cys-246-Cys-255, Cys-250-Cys-261, Cys-263-Cys-279, Cys-283-Cys-292, Cys-287-Cys-298, and Cys-300-Cys-314.

The protein localises to the secreted. In terms of biological role, binds to lipopolysaccharides (LPS) present on the cell walls of Gram-negative bacteria, behaving as a pattern recognition receptor (PRR). Induces bacterial aggregation and enhances their subsequent clearance by the innate immune response. Binds to the inner core oligosaccharides region of rough-type bacterial LPS. Displays activity against the Gram-negative bacterium E.coli. Does not display any activity against the Gram-positive bacterium S.aureus or the fungi C.albicans. This chain is Epidermal growth factor-like protein, found in Holotrichia diomphalia (Korean black chafer).